Consider the following 211-residue polypeptide: Uridine kinase (211 aa).

Residue 12 to 19 (GGSGSGKT) coordinates ATP.

The protein belongs to the uridine kinase family.

Its subcellular location is the cytoplasm. The catalysed reaction is uridine + ATP = UMP + ADP + H(+). It catalyses the reaction cytidine + ATP = CMP + ADP + H(+). It functions in the pathway pyrimidine metabolism; CTP biosynthesis via salvage pathway; CTP from cytidine: step 1/3. The protein operates within pyrimidine metabolism; UMP biosynthesis via salvage pathway; UMP from uridine: step 1/1. The chain is Uridine kinase from Geobacillus sp. (strain WCH70).